The primary structure comprises 291 residues: N-acetylmannosamine kinase (291 aa).

ATP-binding positions include 5 to 12 (AIDIGGTK) and 132 to 139 (GVGGGVVC). Histidine 156, cysteine 166, cysteine 168, and cysteine 173 together coordinate Zn(2+).

Belongs to the ROK (NagC/XylR) family. NanK subfamily. In terms of assembly, homodimer.

The enzyme catalyses an N-acyl-D-mannosamine + ATP = an N-acyl-D-mannosamine 6-phosphate + ADP + H(+). It participates in amino-sugar metabolism; N-acetylneuraminate degradation; D-fructose 6-phosphate from N-acetylneuraminate: step 2/5. Its function is as follows. Catalyzes the phosphorylation of N-acetylmannosamine (ManNAc) to ManNAc-6-P. The chain is N-acetylmannosamine kinase from Salmonella heidelberg (strain SL476).